The following is a 561-amino-acid chain: MRWILCWSLTLCLMAQTALGALHTKRPQVVTKYGTLQGKQMHVGKTPIQVFLGVPFSRPPLGILRFAPPEPPEPWKGIRDATTYPPGCLQESWGQLASMYVSTRERYKWLRFSEDCLYLNVYAPARAPGDPQLPVMVWFPGGAFIVGAASSYEGSDLAAREKVVLVFLQHRLGIFGFLSTDDSHARGNWGLLDQMAALRWVQENIAAFGGDPGNVTLFGQSAGAMSISGLMMSPLASGLFHRAISQSGTALFRLFITSNPLKVAKKVAHLAGCNHNSTQILVNCLRALSGTKVMRVSNKMRFLQLNFQRDPEEIIWSMSPVVDGVVIPDDPLVLLTQGKVSSVPYLLGVNNLEFNWLLPYIMKFPLNRQAMRKETITKMLWSTRTLLNITKEQVPLVVEEYLDNVNEHDWKMLRNRMMDIVQDATFVYATLQTAHYHRDAGLPVYLYEFEHHARGIIVKPRTDGADHGDEMYFLFGGPFATGLSMGKEKALSLQMMKYWANFARTGNPNDGNLPCWPRYNKDEKYLQLDFTTRVGMKLKEKKMAFWMSLYQSQRPEKQRQF.

A signal peptide spans 1–20; sequence MRWILCWSLTLCLMAQTALG. Cysteines 88 and 116 form a disulfide. Asparagine 214 carries N-linked (GlcNAc...) asparagine glycosylation. The Acyl-ester intermediate role is filled by serine 221. The cysteines at positions 273 and 284 are disulfide-linked. The N-linked (GlcNAc...) asparagine glycan is linked to asparagine 276. The active-site Charge relay system is the glutamate 353. Asparagine 388 carries N-linked (GlcNAc...) asparagine glycosylation. Catalysis depends on histidine 467, which acts as the Charge relay system.

Belongs to the type-B carboxylesterase/lipase family.

It is found in the secreted. Its function is as follows. Probable carboxylesterase. The sequence is that of Carboxylesterase 4A (CES4A) from Homo sapiens (Human).